The primary structure comprises 429 residues: MGTIQTLPGTRDILPEEIGYWQYVETITTEILSRAMYQEIRAPIFEQTSLFERGIGEATDVVGKEMYTFKDRGDRSVTLRPEGTAGVVRAYLQNNLYATGGVQRLWYQGPMFRYERPQAGRQRQFHQIGLELLGSGDPRADVEVIALATDILKKLGLQSLKLDLNSVGDRNDRQRYREALVNYFLPYKNELDPDSQDRLERNPLRILDSKNQRTKEINQNAPSILQYLGDQSKKHFDQVQQLLTDLNISYQLNPCLVRGLDYYTHTAFEIQSDDLGAQATVCGGGRYDGLVAELGGPDTPAVGWAIGMERLIILLKQRQTVPHCVPDIYIVSKGEQAEAQALILAQKLRFEGLTVELDLSGSAFGKQFKRADRSGAIACIVLGDEEAGTQTLQLKWLATKQQETLDQTQLVSEIGELKAQLARHKQATG.

This sequence belongs to the class-II aminoacyl-tRNA synthetase family. In terms of assembly, homodimer.

The protein localises to the cytoplasm. It catalyses the reaction tRNA(His) + L-histidine + ATP = L-histidyl-tRNA(His) + AMP + diphosphate + H(+). The protein is Histidine--tRNA ligase of Rippkaea orientalis (strain PCC 8801 / RF-1) (Cyanothece sp. (strain PCC 8801)).